The primary structure comprises 205 residues: dTTP/UTP pyrophosphatase (205 aa).

The Proton acceptor role is filled by Asp-66.

The protein belongs to the Maf family. YhdE subfamily. A divalent metal cation is required as a cofactor.

The protein resides in the cytoplasm. The enzyme catalyses dTTP + H2O = dTMP + diphosphate + H(+). The catalysed reaction is UTP + H2O = UMP + diphosphate + H(+). Functionally, nucleoside triphosphate pyrophosphatase that hydrolyzes dTTP and UTP. May have a dual role in cell division arrest and in preventing the incorporation of modified nucleotides into cellular nucleic acids. In Anaeromyxobacter sp. (strain Fw109-5), this protein is dTTP/UTP pyrophosphatase.